Consider the following 876-residue polypeptide: Alanine--tRNA ligase (876 aa).

Positions 564, 568, 666, and 670 each coordinate Zn(2+).

This sequence belongs to the class-II aminoacyl-tRNA synthetase family. Homotetramer. It depends on Zn(2+) as a cofactor.

Its subcellular location is the cytoplasm. It catalyses the reaction tRNA(Ala) + L-alanine + ATP = L-alanyl-tRNA(Ala) + AMP + diphosphate. Catalyzes the attachment of alanine to tRNA(Ala) in a two-step reaction: alanine is first activated by ATP to form Ala-AMP and then transferred to the acceptor end of tRNA(Ala). Also edits incorrectly charged Ser-tRNA(Ala) and Gly-tRNA(Ala) via its editing domain. The chain is Alanine--tRNA ligase from Salmonella paratyphi B (strain ATCC BAA-1250 / SPB7).